A 461-amino-acid polypeptide reads, in one-letter code: Propanal dehydrogenase (CoA-propanoylating) (461 aa).

The segment at 1–18 is targets protein to the BMC; the sequence is MNTSELETLIRNILSEQL.

The protein belongs to the EutE/PduP family. Interacts with PduK, probably with its BMC-containing N-terminus. Interacts with shell proteins PduA and PduJ, interacts with PduQ.

The protein resides in the bacterial microcompartment. The enzyme catalyses propanal + NAD(+) + CoA = propanoyl-CoA + NADH + H(+). It functions in the pathway polyol metabolism; 1,2-propanediol degradation. In terms of biological role, a CoA-acylating aldehyde dehydrogenase required for optimal 1,2-propanediol (1,2-PD) degradation. Optimizes growth in the bacterial microcompartment (BMC) dedicated to 1,2-PD degradation by minimizing propionaldehyde toxicity. NAD(+) and NADH are regenerated internally within the Pdu BMC by the PduP and PduQ enzymes, which reduce NAD(+) and oxidize NADH respectively, although there must also be cofactor transport across the BMC. Directly targeted to the BMC. Its function is as follows. Expression of a cosmid containing the full 21-gene pdu operon in E.coli allows E.coli to grow on 1,2-propanediol (1,2-PD) with the appearance of bacterial microcompartments (BMC) in its cytoplasm. Functionally, the 1,2-PD-specific bacterial microcompartment (BMC) concentrates low levels of 1,2-PD catabolic enzymes, concentrates volatile reaction intermediates thus enhancing pathway flux and keeps the level of toxic, mutagenic propionaldehyde low. In Citrobacter freundii, this protein is Propanal dehydrogenase (CoA-propanoylating).